We begin with the raw amino-acid sequence, 270 residues long: Proteasome subunit alpha (270 aa).

The disordered stretch occupies residues 229 to 270; sequence LLDTEAAGSTPTDAPSDTEDGDSTDGTDRADGTTDSTEETEK. Residues 244–253 are compositionally biased toward acidic residues; it reads SDTEDGDSTD.

This sequence belongs to the peptidase T1A family. The 20S proteasome core is composed of 14 alpha and 14 beta subunits that assemble into four stacked heptameric rings, resulting in a barrel-shaped structure. The two inner rings, each composed of seven catalytic beta subunits, are sandwiched by two outer rings, each composed of seven alpha subunits. The catalytic chamber with the active sites is on the inside of the barrel. Has a gated structure, the ends of the cylinder being occluded by the N-termini of the alpha-subunits. Is capped by the proteasome-associated ATPase, ARC.

The protein resides in the cytoplasm. The protein operates within protein degradation; proteasomal Pup-dependent pathway. With respect to regulation, the formation of the proteasomal ATPase ARC-20S proteasome complex, likely via the docking of the C-termini of ARC into the intersubunit pockets in the alpha-rings, may trigger opening of the gate for substrate entry. Interconversion between the open-gate and close-gate conformations leads to a dynamic regulation of the 20S proteasome proteolysis activity. In terms of biological role, component of the proteasome core, a large protease complex with broad specificity involved in protein degradation. This chain is Proteasome subunit alpha, found in Streptomyces griseus subsp. griseus (strain JCM 4626 / CBS 651.72 / NBRC 13350 / KCC S-0626 / ISP 5235).